The chain runs to 260 residues: Neuraminyllactose-binding hemagglutinin (260 aa).

The signal sequence occupies residues 1 to 27 (MKTNGHFKDFAWKKCLLGASVGALLVG). The N-palmitoyl cysteine moiety is linked to residue Cys-28. Cys-28 carries the S-diacylglycerol cysteine lipid modification. The N-acetyl-neuraminyl-alpha(2,3)-lactose binding motif stretch occupies residues 134-139 (KRTIQK).

It localises to the cell outer membrane. The protein is Neuraminyllactose-binding hemagglutinin (hpaA) of Helicobacter pylori (Campylobacter pylori).